The chain runs to 280 residues: Ribosomal RNA small subunit methyltransferase A (280 aa).

Asn27, Leu29, Gly54, Glu76, Asp102, and Asn122 together coordinate S-adenosyl-L-methionine.

It belongs to the class I-like SAM-binding methyltransferase superfamily. rRNA adenine N(6)-methyltransferase family. RsmA subfamily.

It is found in the cytoplasm. The catalysed reaction is adenosine(1518)/adenosine(1519) in 16S rRNA + 4 S-adenosyl-L-methionine = N(6)-dimethyladenosine(1518)/N(6)-dimethyladenosine(1519) in 16S rRNA + 4 S-adenosyl-L-homocysteine + 4 H(+). Functionally, specifically dimethylates two adjacent adenosines (A1518 and A1519) in the loop of a conserved hairpin near the 3'-end of 16S rRNA in the 30S particle. May play a critical role in biogenesis of 30S subunits. In Oleidesulfovibrio alaskensis (strain ATCC BAA-1058 / DSM 17464 / G20) (Desulfovibrio alaskensis), this protein is Ribosomal RNA small subunit methyltransferase A.